A 65-amino-acid polypeptide reads, in one-letter code: Prokaryotic ubiquitin-like protein Pup (65 aa).

The span at 1–13 (MAQEQKQPRKSSE) shows a compositional bias: basic and acidic residues. A disordered region spans residues 1-34 (MAQEQKQPRKSSEADEAVEAVAETDVSERKEALD). Residues 21–59 (VAETDVSERKEALDSDVDDILDEIDDVLETNAEDFVKSF) are ARC ATPase binding. Residues 25-49 (DVSERKEALDSDVDDILDEIDDVLE) are a coiled coil. Glu65 is covalently cross-linked (Isoglutamyl lysine isopeptide (Glu-Lys) (interchain with K-? in acceptor proteins)).

This sequence belongs to the prokaryotic ubiquitin-like protein family. In terms of assembly, strongly interacts with the proteasome-associated ATPase ARC through a hydrophobic interface; the interacting region of Pup lies in its C-terminal half. There is one Pup binding site per ARC hexamer ring.

It participates in protein degradation; proteasomal Pup-dependent pathway. Functionally, protein modifier that is covalently attached to lysine residues of substrate proteins, thereby targeting them for proteasomal degradation. The tagging system is termed pupylation. This is Prokaryotic ubiquitin-like protein Pup from Nocardioides sp. (strain ATCC BAA-499 / JS614).